The primary structure comprises 332 residues: MKVTFEELKGAFYRVLRSRNIAEDTADECAEMFARTTESGVYSHGVNRFPRFIQQLDNGDIIPDAKPQRVTSLGAIEQWDAKRAIGNLTAKKMMDRAIELASDHGIGLVALRNANHWMRGGSYGWQAAEKGYIGICWTNSIAVMPPWGAKECRIGTNPLIVAIPSTPITMVDMSMSMFSYGMLEVNRLAGRELPVDGGFDDNGQLTKEPGVIEKNRRILPMGYWKGSGLSIVLDMIATLLSNGSSVAEVTQENSDEYGVSQIFIAIEVDKLIDGATRDAKLQRIMDFITTAERADDNVAIRLPGHEFTKLLDDNRRHGITIDDSVWAKIQAL.

The active-site Proton donor is His-44. NAD(+) contacts are provided by residues 168–174 (ITMVDMS), 224–225 (WK), and 304–306 (GHE).

This sequence belongs to the LDH2/MDH2 oxidoreductase family. DlgD subfamily. In terms of assembly, homodimer.

The protein resides in the cytoplasm. The enzyme catalyses 3-dehydro-L-gulonate + NAD(+) = 2,3-dioxo-L-gulonate + NADH + H(+). It carries out the reaction 3-dehydro-L-gulonate + NADP(+) = 2,3-dioxo-L-gulonate + NADPH + H(+). Its function is as follows. Catalyzes the reduction of 2,3-diketo-L-gulonate in the presence of NADH, to form 3-keto-L-gulonate. This Salmonella paratyphi B (strain ATCC BAA-1250 / SPB7) protein is 2,3-diketo-L-gulonate reductase.